The sequence spans 418 residues: Glutamyl-tRNA reductase (418 aa).

Substrate-binding positions include 49 to 52 (TCNR), Ser109, 114 to 116 (EPQ), and Gln120. The active-site Nucleophile is Cys50. Position 189 to 194 (189 to 194 (GAGETI)) interacts with NADP(+).

Belongs to the glutamyl-tRNA reductase family. In terms of assembly, homodimer.

It catalyses the reaction (S)-4-amino-5-oxopentanoate + tRNA(Glu) + NADP(+) = L-glutamyl-tRNA(Glu) + NADPH + H(+). It participates in porphyrin-containing compound metabolism; protoporphyrin-IX biosynthesis; 5-aminolevulinate from L-glutamyl-tRNA(Glu): step 1/2. Its function is as follows. Catalyzes the NADPH-dependent reduction of glutamyl-tRNA(Glu) to glutamate 1-semialdehyde (GSA). The polypeptide is Glutamyl-tRNA reductase (Escherichia fergusonii (strain ATCC 35469 / DSM 13698 / CCUG 18766 / IAM 14443 / JCM 21226 / LMG 7866 / NBRC 102419 / NCTC 12128 / CDC 0568-73)).